The chain runs to 157 residues: Protein-export protein SecB (157 aa).

It belongs to the SecB family. In terms of assembly, homotetramer, a dimer of dimers. One homotetramer interacts with 1 SecA dimer.

The protein resides in the cytoplasm. Its function is as follows. One of the proteins required for the normal export of preproteins out of the cell cytoplasm. It is a molecular chaperone that binds to a subset of precursor proteins, maintaining them in a translocation-competent state. It also specifically binds to its receptor SecA. The chain is Protein-export protein SecB from Alcanivorax borkumensis (strain ATCC 700651 / DSM 11573 / NCIMB 13689 / SK2).